We begin with the raw amino-acid sequence, 352 residues long: Pejvakin (352 aa).

Belongs to the gasdermin family. As to quaternary structure, interacts with MAP1LC3B; interaction is direct. Interacts with IQGAP1. Interacts with ROCK2. Interacts with TRIOBP. In ear, it is detected in the organ of Corti and the spiral ganglion within the cochlea in the sensory areas of the vestibule (cristae ampullares of the semicircular ducts, and maculae of the saccule and utricle) and in the first 3 relays (cochlear nuclei, superior olivary complex and inferior colliculus) of the afferent auditory pathway. Detected in hair cells of the cochlea and vestibule but not in neurons. In the afferent auditory pathway, it is present in the cell bodies of neurons but not in fiber bundles such as the trapezoid body in the brainstem. Also detected in spiral ganglion cells, which form the auditory nerve and project to the cochlear nuclei in the brainstem. Also present in the cochlear nuclei, the superior olive and the inferior colliculus (at protein level). Expressed in all the adult organs tested: brain, eye, inner ear, heart, lung, kidney, liver, intestine, testis and weakly in skeletal muscle.

It localises to the peroxisome membrane. It is found in the cell projection. Its subcellular location is the cilium. Its function is as follows. Peroxisome-associated protein required to protect auditory hair cells against noise-induced damage. Acts by regulating noise-induced peroxisome proliferation in auditory hair cells and neurons, and promoting autophagic degradation of damaged peroxisomes (pexophagy). Noise overexposure increases reactive oxygen species (ROS) levels, causing oxidative damage to auditory hair cells and resulting in hearing loss. PJVK acts as a ROS sensor that recruits the autophagy machinery to trigger pexophagy of peroxisomes damaged by oxidative stress. In addition to pexophagy, also required to promote peroxisome proliferation in response to sound overstimulation. The polypeptide is Pejvakin (Mus musculus (Mouse)).